The sequence spans 369 residues: DNA replication and repair protein RecF (369 aa).

Position 30–37 (30–37 (GRNAQGKT)) interacts with ATP.

Belongs to the RecF family.

Its subcellular location is the cytoplasm. Functionally, the RecF protein is involved in DNA metabolism; it is required for DNA replication and normal SOS inducibility. RecF binds preferentially to single-stranded, linear DNA. It also seems to bind ATP. The polypeptide is DNA replication and repair protein RecF (Streptococcus agalactiae serotype III (strain NEM316)).